Reading from the N-terminus, the 346-residue chain is Serine/threonine-protein phosphatase PP1(4.8) (346 aa).

The disordered stretch occupies residues 46 to 65 (QSAQTQESTPKTNGTGRATT). Mn(2+)-binding residues include Asp-102, His-104, Asp-130, and Asn-162. The active-site Proton donor is His-163. Mn(2+) is bound by residues His-211 and His-287.

It belongs to the PPP phosphatase family. PP-1 subfamily. Requires Mn(2+) as cofactor.

It carries out the reaction O-phospho-L-seryl-[protein] + H2O = L-seryl-[protein] + phosphate. It catalyses the reaction O-phospho-L-threonyl-[protein] + H2O = L-threonyl-[protein] + phosphate. This is Serine/threonine-protein phosphatase PP1(4.8) from Trypanosoma brucei brucei.